A 691-amino-acid chain; its full sequence is Elongation factor G (691 aa).

In terms of domain architecture, tr-type G spans 8 to 283 (EDYRNFGIMA…AVVDYLPSPI (276 aa)). GTP contacts are provided by residues 17-24 (AHIDAGKT), 81-85 (DTPGH), and 135-138 (NKMD).

The protein belongs to the TRAFAC class translation factor GTPase superfamily. Classic translation factor GTPase family. EF-G/EF-2 subfamily.

The protein resides in the cytoplasm. Functionally, catalyzes the GTP-dependent ribosomal translocation step during translation elongation. During this step, the ribosome changes from the pre-translocational (PRE) to the post-translocational (POST) state as the newly formed A-site-bound peptidyl-tRNA and P-site-bound deacylated tRNA move to the P and E sites, respectively. Catalyzes the coordinated movement of the two tRNA molecules, the mRNA and conformational changes in the ribosome. The sequence is that of Elongation factor G from Methylocella silvestris (strain DSM 15510 / CIP 108128 / LMG 27833 / NCIMB 13906 / BL2).